Reading from the N-terminus, the 82-residue chain is Sigma-G-dependent sporulation-specific SASP protein (82 aa).

This Bacillus subtilis (strain 168) protein is Sigma-G-dependent sporulation-specific SASP protein.